The sequence spans 508 residues: Asparagine--tRNA ligase (508 aa).

The protein belongs to the class-II aminoacyl-tRNA synthetase family. In terms of assembly, homodimer.

Its subcellular location is the cytoplasm. It catalyses the reaction tRNA(Asn) + L-asparagine + ATP = L-asparaginyl-tRNA(Asn) + AMP + diphosphate + H(+). In Streptococcus suis (strain 05ZYH33), this protein is Asparagine--tRNA ligase.